Reading from the N-terminus, the 436-residue chain is Serine--tRNA ligase (436 aa).

Position 242–244 (242–244) interacts with L-serine; that stretch reads TAE. Position 273–275 (273–275) interacts with ATP; that stretch reads RSE. An L-serine-binding site is contributed by E296. 360–363 serves as a coordination point for ATP; sequence EISS. L-serine is bound at residue S395.

Belongs to the class-II aminoacyl-tRNA synthetase family. Type-1 seryl-tRNA synthetase subfamily. In terms of assembly, homodimer. The tRNA molecule binds across the dimer.

The protein resides in the cytoplasm. It catalyses the reaction tRNA(Ser) + L-serine + ATP = L-seryl-tRNA(Ser) + AMP + diphosphate + H(+). It carries out the reaction tRNA(Sec) + L-serine + ATP = L-seryl-tRNA(Sec) + AMP + diphosphate + H(+). It functions in the pathway aminoacyl-tRNA biosynthesis; selenocysteinyl-tRNA(Sec) biosynthesis; L-seryl-tRNA(Sec) from L-serine and tRNA(Sec): step 1/1. Catalyzes the attachment of serine to tRNA(Ser). Is also able to aminoacylate tRNA(Sec) with serine, to form the misacylated tRNA L-seryl-tRNA(Sec), which will be further converted into selenocysteinyl-tRNA(Sec). This is Serine--tRNA ligase from Polynucleobacter necessarius subsp. necessarius (strain STIR1).